Consider the following 337-residue polypeptide: UDP-3-O-acylglucosamine N-acyltransferase (337 aa).

Histidine 238 (proton acceptor) is an active-site residue.

This sequence belongs to the transferase hexapeptide repeat family. LpxD subfamily. In terms of assembly, homotrimer.

It carries out the reaction a UDP-3-O-[(3R)-3-hydroxyacyl]-alpha-D-glucosamine + a (3R)-hydroxyacyl-[ACP] = a UDP-2-N,3-O-bis[(3R)-3-hydroxyacyl]-alpha-D-glucosamine + holo-[ACP] + H(+). It functions in the pathway bacterial outer membrane biogenesis; LPS lipid A biosynthesis. Functionally, catalyzes the N-acylation of UDP-3-O-acylglucosamine using 3-hydroxyacyl-ACP as the acyl donor. Is involved in the biosynthesis of lipid A, a phosphorylated glycolipid that anchors the lipopolysaccharide to the outer membrane of the cell. The chain is UDP-3-O-acylglucosamine N-acyltransferase from Xanthomonas euvesicatoria pv. vesicatoria (strain 85-10) (Xanthomonas campestris pv. vesicatoria).